The sequence spans 491 residues: Tyrosine 3-monooxygenase (491 aa).

Ser-19 carries the phosphoserine; by CaMK2 modification. Ser-31 is subject to Phosphoserine. Position 40 is a phosphoserine; by CaMK2 and PKA (Ser-40). Fe cation is bound by residues His-324, His-329, and Glu-369. Ser-465 is subject to Phosphoserine.

It belongs to the biopterin-dependent aromatic amino acid hydroxylase family. Homotetramer. Interacts (when phosphorylated at Ser-19) with YWHAG; one YWHAG dimer bounds to one TH tetramer and this interaction may influence the phosphorylation and dephosphorylation of other sites. Interacts with NT5DC2; the interaction results in reduced phosphorylation and decreased catalytic activity of TH. The cofactor is Fe(2+). Post-translationally, phosphorylated on Ser-19, Ser-31 and Ser-40 by several protein kinases with different site specificities. Phosphorylation at Ser-31 and Ser-40 leads to an increase of TH activity. Phosphorylation at Ser-40 activates the enzyme and also counteracts the feedback inhibition of TH by catecholamines. Phosphorylation of Ser-19 and Ser-31 triggers the proteasomal degradation of TH through the ubiquitin-proteasome pathway. Phosphorylation at Ser-31 facilitates transport of TH from the soma to the nerve terminals via the microtubule network. Phosphorylation at Ser-19 induces the high-affinity binding to the 14-3-3 protein YWHAG; this interaction may influence the phosphorylation and dephosphorylation of other sites. Ser-19 increases the phosphorylation at Ser-40 in a hierarchical manner, leading to increased activity.

The protein localises to the cytoplasm. The protein resides in the perinuclear region. It is found in the nucleus. Its subcellular location is the cell projection. It localises to the axon. The protein localises to the cytoplasmic vesicle. The protein resides in the secretory vesicle. It is found in the synaptic vesicle. It catalyses the reaction (6R)-L-erythro-5,6,7,8-tetrahydrobiopterin + L-tyrosine + O2 = (4aS,6R)-4a-hydroxy-L-erythro-5,6,7,8-tetrahydrobiopterin + L-dopa. The protein operates within catecholamine biosynthesis; dopamine biosynthesis; dopamine from L-tyrosine: step 1/2. Its activity is regulated as follows. Inhibited in feedback fashion by the catecholamine neurotransmitters, especially by dopamine in competition with tetrahydrobiopterin. Phosphorylation of several Ser/Thr residues in the N-terminus regulates the catalytic activity. Ser-31 and Ser-40 are readily phosphorylated to activate the catalytic activity. A Cysteine modification induced by N-ethylmaleimide (NEM), inhibits tyrosine 3-monooxygenase activity through the modification of the Cys-170. In terms of biological role, catalyzes the conversion of L-tyrosine to L-dihydroxyphenylalanine (L-Dopa), the rate-limiting step in the biosynthesis of catecholamines, dopamine, noradrenaline, and adrenaline. Uses tetrahydrobiopterin and molecular oxygen to convert tyrosine to L-Dopa. In addition to tyrosine, is able to catalyze the hydroxylation of phenylalanine and tryptophan with lower specificity. Positively regulates the regression of retinal hyaloid vessels during postnatal development. The protein is Tyrosine 3-monooxygenase (TH) of Bos taurus (Bovine).